Reading from the N-terminus, the 83-residue chain is Cytochrome b559 subunit alpha (83 aa).

Residues valine 21–tryptophan 35 traverse the membrane as a helical segment. Residue histidine 23 participates in heme binding.

This sequence belongs to the PsbE/PsbF family. Heterodimer of an alpha subunit and a beta subunit. PSII is composed of 1 copy each of membrane proteins PsbA, PsbB, PsbC, PsbD, PsbE, PsbF, PsbH, PsbI, PsbJ, PsbK, PsbL, PsbM, PsbT, PsbX, PsbY, PsbZ, Psb30/Ycf12, at least 3 peripheral proteins of the oxygen-evolving complex and a large number of cofactors. It forms dimeric complexes. Heme b serves as cofactor.

It is found in the plastid. The protein localises to the chloroplast thylakoid membrane. This b-type cytochrome is tightly associated with the reaction center of photosystem II (PSII). PSII is a light-driven water:plastoquinone oxidoreductase that uses light energy to abstract electrons from H(2)O, generating O(2) and a proton gradient subsequently used for ATP formation. It consists of a core antenna complex that captures photons, and an electron transfer chain that converts photonic excitation into a charge separation. This chain is Cytochrome b559 subunit alpha, found in Huperzia lucidula (Shining clubmoss).